The primary structure comprises 457 residues: Prenyltransferase ucdE (457 aa).

Residues Arg106, Lys198, Lys277, Tyr279, Tyr382, Tyr447, and Tyr451 each coordinate dimethylallyl diphosphate.

The protein belongs to the tryptophan dimethylallyltransferase family.

It functions in the pathway secondary metabolite biosynthesis. Nonribosomal peptide synthetase that mediates the biosynthesis of usterphenyllins and uscandidusins, p-terphenyl derivatives. Within the pathway, ucdE prenylates position C-5 of ring A of 3,15-dihydroxyterphenyllin to produce forms usterphenyllin B. UcdE further prenylates position C-14 of ring C of usterphenyllin B to form usterphenyllin A. The pathway begin with the biosynthesis of 4-hydroxyphenylpyruvate (HPPA) from L-tyrosine, possibly by the aminotransferase ucdG. The nonribosomal peptide synthetase ucdA then condenses two HPPA units to produce atromentin. The key step in this pathway is the reduction and dehydration of atromentin to form a terphenyl triol intermediate, performed by the NAD-dependent dehydrogenase ucdB. Further O-methylation by the methyltransferase ucdC forms terphenyllin carrying two methoxy moieties at C-9 and C-12, and subsequent dihydroxylation at C-3 of ring A and C-15 of ring C by the flavin-dependent oxygenase ucdD leads to 3,15-dihydroxyterphenyllin. Prenylation by ucdE at position C-5 of ring A forms usterphenyllin B, and is followed by a second prenylation at position C-14 of ring C to form usterphenyllin A. The following furan ring formation that leads to uscandidusins A and B was proven to be an unexpected spontaneous non-enzymatic reaction. In Aspergillus ustus, this protein is Prenyltransferase ucdE.